The following is a 240-amino-acid chain: 2,3,4,5-tetrahydropyridine-2,6-dicarboxylate N-acetyltransferase (240 aa).

It belongs to the transferase hexapeptide repeat family. DapH subfamily.

The catalysed reaction is (S)-2,3,4,5-tetrahydrodipicolinate + acetyl-CoA + H2O = L-2-acetamido-6-oxoheptanedioate + CoA. It functions in the pathway amino-acid biosynthesis; L-lysine biosynthesis via DAP pathway; LL-2,6-diaminopimelate from (S)-tetrahydrodipicolinate (acetylase route): step 1/3. Its function is as follows. Catalyzes the transfer of an acetyl group from acetyl-CoA to tetrahydrodipicolinate. The chain is 2,3,4,5-tetrahydropyridine-2,6-dicarboxylate N-acetyltransferase from Shouchella clausii (strain KSM-K16) (Alkalihalobacillus clausii).